A 528-amino-acid polypeptide reads, in one-letter code: Equilibrative nucleoside transporter 4 (528 aa).

At 1 to 68 (MGSIGSQRLK…EEPVPDDRYH (68 aa)) the chain is on the extracellular side. Residues 69–89 (AIYFAMLLAGVGFLLPYNSFI) traverse the membrane as a helical segment. The Cytoplasmic portion of the chain corresponds to 90–101 (TDVDYLHHKYPG). Residues 102-122 (TSIVFDMSLTYILVALAAVLL) form a helical membrane-spanning segment. At 123–139 (NNVVVERLNLHTRITTG) the chain is on the extracellular side. A helical membrane pass occupies residues 140 to 160 (YLLALGPLLFISICDVWLQLF). Residues 161 to 166 (SHDQAY) lie on the Cytoplasmic side of the membrane. A helical membrane pass occupies residues 167 to 187 (AINLAAVGTVAFGCTVQQSSF). Over 188–231 (YGYTGLLPKRYTQGVMTGESTAGVMISLSRILTKLLLPDERAST) the chain is Extracellular. The helical transmembrane segment at 232–252 (IIFFLVSAGLELLCFLLHLLV) threads the bilayer. Over 253–346 (RRSRFVLYYT…LLLHRYVVAR (94 aa)) the chain is Cytoplasmic. Residues 347–367 (VIWADMLSIAVTYFITLCLFP) traverse the membrane as a helical segment. At 368 to 376 (GLESEIRHC) the chain is on the extracellular side. A helical membrane pass occupies residues 377 to 397 (VLGEWLPILVMAVFNLSDFVG). The Cytoplasmic portion of the chain corresponds to 398–411 (KILAALPVEWRGTH). A helical membrane pass occupies residues 412 to 432 (LLACSCLRVVFIPLFILCVYP). The Extracellular portion of the chain corresponds to 433 to 445 (SGMPALRHPAWPC). Residues 446 to 466 (VFSLLMGISNGYFGSVPMILA) traverse the membrane as a helical segment. Residues 467-481 (AGKVSPKQRELAGNT) lie on the Cytoplasmic side of the membrane. Residues 482 to 504 (MTVSYMSGLTLGSAVAYCTYSLT) form a helical membrane-spanning segment. The Extracellular segment spans residues 505 to 528 (RDAHGSCFQTATAAAANDSIPVGP). N-linked (GlcNAc...) asparagine glycosylation occurs at Asn-521.

The protein belongs to the SLC29A/ENT transporter (TC 2.A.57) family. Post-translationally, N-glycosylated. As to expression, expressed in heart. Expressed in choroid plexus.

The protein localises to the cell membrane. It is found in the apical cell membrane. It carries out the reaction serotonin(out) = serotonin(in). It catalyses the reaction dopamine(out) = dopamine(in). The enzyme catalyses (R)-noradrenaline(out) = (R)-noradrenaline(in). The catalysed reaction is (R)-adrenaline(out) = (R)-adrenaline(in). It carries out the reaction histamine(out) = histamine(in). It catalyses the reaction tyramine(in) = tyramine(out). The enzyme catalyses guanidine(out) = guanidine(in). The catalysed reaction is adenine(out) = adenine(in). It carries out the reaction adenosine(in) = adenosine(out). Activated at acidic pH. Electrogenic voltage-dependent transporter that mediates the transport of a variety of endogenous bioactive amines, cationic xenobiotics and drugs. Utilizes the physiologic inside-negative membrane potential as a driving force to facilitate cellular uptake of organic cations. Functions as a Na(+)- and Cl(-)-independent bidirectional transporter. Substrate transport is pH-dependent and enhanced under acidic condition, which is most likely the result of allosteric changes in the transporter structure. Implicated in monoamine neurotransmitters uptake such as serotonin, dopamine, adrenaline/epinephrine, noradrenaline/norepinephrine, histamine and tyramine, thereby supporting a role in homeostatic regulation of aminergic neurotransmission in the central nervous system. Also responsible for the uptake of bioactive amines and drugs through the blood-cerebrospinal fluid (CSF) barrier, from the CSF into choroid plexus epithelial cells, thereby playing a significant role in the clearance of cationic neurotoxins, xenobiotics and metabolic waste in the brain. Involved in bidirectional transport of the purine nucleoside adenosine and plays a role in the regulation of extracellular adenosine concentrations in cardiac tissues, in particular during ischemia. May be involved in organic cation uptake from the tubular lumen into renal tubular cells, thereby contributing to organic cation reabsorption in the kidney. Also transports adenine and guanidine. This chain is Equilibrative nucleoside transporter 4, found in Mus musculus (Mouse).